A 394-amino-acid polypeptide reads, in one-letter code: Phosphoglycerate kinase (394 aa).

Substrate contacts are provided by residues 21–23 (DLN), arginine 36, 59–62 (HLGR), arginine 113, and arginine 146. ATP contacts are provided by residues lysine 197, glutamate 319, and 345-348 (GGDT).

It belongs to the phosphoglycerate kinase family. Monomer.

It is found in the cytoplasm. It catalyses the reaction (2R)-3-phosphoglycerate + ATP = (2R)-3-phospho-glyceroyl phosphate + ADP. It participates in carbohydrate degradation; glycolysis; pyruvate from D-glyceraldehyde 3-phosphate: step 2/5. The chain is Phosphoglycerate kinase from Halorhodospira halophila (strain DSM 244 / SL1) (Ectothiorhodospira halophila (strain DSM 244 / SL1)).